A 151-amino-acid polypeptide reads, in one-letter code: D-aminoacyl-tRNA deacylase (151 aa).

The short motif at 137 to 138 (GP) is the Gly-cisPro motif, important for rejection of L-amino acids element.

The protein belongs to the DTD family. As to quaternary structure, homodimer.

It localises to the cytoplasm. It catalyses the reaction glycyl-tRNA(Ala) + H2O = tRNA(Ala) + glycine + H(+). The enzyme catalyses a D-aminoacyl-tRNA + H2O = a tRNA + a D-alpha-amino acid + H(+). Functionally, an aminoacyl-tRNA editing enzyme that deacylates mischarged D-aminoacyl-tRNAs. Also deacylates mischarged glycyl-tRNA(Ala), protecting cells against glycine mischarging by AlaRS. Acts via tRNA-based rather than protein-based catalysis; rejects L-amino acids rather than detecting D-amino acids in the active site. By recycling D-aminoacyl-tRNA to D-amino acids and free tRNA molecules, this enzyme counteracts the toxicity associated with the formation of D-aminoacyl-tRNA entities in vivo and helps enforce protein L-homochirality. This Listeria monocytogenes serotype 4a (strain HCC23) protein is D-aminoacyl-tRNA deacylase.